The sequence spans 179 residues: Inner membrane-spanning protein YciB (179 aa).

The next 5 membrane-spanning stretches (helical) occupy residues 22–42 (IYAATSALIVATAIVLIYSWV), 50–70 (MALITFVLVAVFGGLTIFFHN), 76–96 (WKVTVIYGLFAGALLISQWVM), 121–141 (LAWAVFFILCGLANIYIAFWL), and 149–169 (FKVFGLTALTLIFTLLSGVYI).

Belongs to the YciB family.

The protein localises to the cell inner membrane. Plays a role in cell envelope biogenesis, maintenance of cell envelope integrity and membrane homeostasis. The chain is Inner membrane-spanning protein YciB from Citrobacter koseri (strain ATCC BAA-895 / CDC 4225-83 / SGSC4696).